The chain runs to 799 residues: Cadherin-8 (799 aa).

The N-terminal stretch at 1-29 (MPERLAETLMDLWTPLIILWITLPSCVYT) is a signal peptide. A propeptide spanning residues 30–61 (APMNQAHVLTTGSPLELSRQSEDMRILSRSKR) is cleaved from the precursor. Cadherin domains lie at 62–167 (GWVW…APEF), 168–276 (LNGP…PPKF), 277–391 (AQSL…PPVF), 392–494 (SSPT…DNAP), and 495–616 (EFAS…YVLP). Residues 62–621 (GWVWNQMFVL…AYVLPIGLSM (560 aa)) are Extracellular-facing. Residue Asn188 is glycosylated (N-linked (GlcNAc...) asparagine). 3 N-linked (GlcNAc...) asparagine glycosylation sites follow: Asn463, Asn473, and Asn544. A helical membrane pass occupies residues 622–642 (GALIAILACIILLLVIVVLFV). The Cytoplasmic portion of the chain corresponds to 643-799 (TLRRHKNEPL…YSVGESDKET (157 aa)). Phosphoserine is present on Ser795.

Its subcellular location is the cell membrane. Its function is as follows. Cadherins are calcium-dependent cell adhesion proteins. They preferentially interact with themselves in a homophilic manner in connecting cells; cadherins may thus contribute to the sorting of heterogeneous cell types. This Mus musculus (Mouse) protein is Cadherin-8 (Cdh8).